The chain runs to 79 residues: NADH-ubiquinone oxidoreductase chain 5 (79 aa).

Helical transmembrane passes span 5–27 and 40–57; these read TPIM…TNPY and VMYA…FILS.

The protein belongs to the complex I subunit 5 family. In terms of assembly, core subunit of respiratory chain NADH dehydrogenase (Complex I) which is composed of 45 different subunits.

The protein resides in the mitochondrion inner membrane. It catalyses the reaction a ubiquinone + NADH + 5 H(+)(in) = a ubiquinol + NAD(+) + 4 H(+)(out). In terms of biological role, core subunit of the mitochondrial membrane respiratory chain NADH dehydrogenase (Complex I) which catalyzes electron transfer from NADH through the respiratory chain, using ubiquinone as an electron acceptor. Essential for the catalytic activity and assembly of complex I. The protein is NADH-ubiquinone oxidoreductase chain 5 (MT-ND5) of Macaca fascicularis (Crab-eating macaque).